Consider the following 573-residue polypeptide: FAD-dependent monooxygenase resA (573 aa).

The signal sequence occupies residues 1 to 17; it reads MYDVIVIGAGWCGLVAA. I106 is an FAD binding site. The N-linked (GlcNAc...) asparagine glycan is linked to N235.

Belongs to the FAD-binding monooxygenase family. FAD serves as cofactor.

Its pathway is antifungal biosynthesis. Functionally, FAD-dependent monooxygenase; part of the gene cluster that mediates the biosynthesis of the tetrahydropyranyl antifungal agent restricticin that acts as an inhibitor of CYP51 and blocks the ergosterol biosynthesis. The highly reducing polyketide synthase resH, the short chain dehydrogenase resG, the cyclase resF, the FAD-dependent monooxygenase resA and the enoylreductase resD are required to generate the first stable intermediate desmethylrestrictinol. ResH with resD biosynthesize the first polyketide chain intermediate that is reduced by resG, followed by epoxidation by resA before 6-endo cyclization via epoxide opening by resF leads to desmethylrestrictinol. The methyltransferase resE then catalyzes the C4 O-methylation of desmethylrestrictinol to produce restrictinol, and the nonribosomal peptide synthetase resC catalyzes the C3 esterification of restrictinol with glycine that leads to restricticin. The chain is FAD-dependent monooxygenase resA from Aspergillus sclerotiorum.